A 244-amino-acid chain; its full sequence is Glutathione S-transferase theta-2B (244 aa).

The GST N-terminal domain maps to 2 to 82 (GLELFLDLVS…YLSCKYQTPD (81 aa)). Residues 40-41 (HK), 53-54 (KL), 66-67 (ES), and 104-107 (DCIR) contribute to the glutathione site. A GST C-terminal domain is found at 88-224 (DLQARARVHE…SILEQAAKKT (137 aa)).

Belongs to the GST superfamily. Theta family. As to quaternary structure, homodimer. In terms of tissue distribution, expressed at low levels in liver. In lung, expressed at low levels in ciliated bronchiolar cells, alveolar macrophages and alveolar type II cells.

It localises to the cytoplasm. It is found in the cytosol. The enzyme catalyses RX + glutathione = an S-substituted glutathione + a halide anion + H(+). Conjugation of reduced glutathione to a wide number of exogenous and endogenous hydrophobic electrophiles. Has a sulfatase activity. This Homo sapiens (Human) protein is Glutathione S-transferase theta-2B (GSTT2B).